Reading from the N-terminus, the 479-residue chain is Serralysin C (479 aa).

The propeptide occupies 1-17; it reads MGKNLSLRQDDAQHALS. His-188 contributes to the Zn(2+) binding site. The active site involves Glu-189. His-192 and Tyr-228 together coordinate Zn(2+). Residues Arg-265, Gly-267, Asp-297, Gly-299, Gly-300, Asp-302, Thr-339, Glu-341, Gly-346, Gly-348, Asp-350, Asn-355, Ala-357, Asn-359, Gly-363, Gly-364, Ala-365, Gly-366, Asp-368, Gly-372, Gly-373, Gly-375, Asp-377, Gly-381, Gly-382, Ala-383, Gly-384, Asp-386, Asp-395, Asp-402, and Asp-412 each contribute to the Ca(2+) site. Hemolysin-type calcium-binding repeat units follow at residues 344 to 361, 362 to 379, and 380 to 397; these read IGGS…DNIL, QGGA…ADTL, and YGGA…QDST.

It belongs to the peptidase M10B family. The cofactor is Ca(2+). Zn(2+) is required as a cofactor.

Its subcellular location is the secreted. The enzyme catalyses Preferential cleavage of bonds with hydrophobic residues in P1'.. The polypeptide is Serralysin C (prtC) (Dickeya chrysanthemi (Pectobacterium chrysanthemi)).